A 170-amino-acid chain; its full sequence is Probable calcium-binding protein CML27 (170 aa).

An N-acetylalanine modification is found at Ala2. 4 consecutive EF-hand domains span residues 19-54, 55-85, 88-123, and 136-159; these read ANPEELKKVFDQFDSNGDGKISVLELGGVFKAMGTS, YTETELNRVLEEVDTDRDGYINLDEFSTLCR, SSAAEIRDAFDLYDQDKNGLISASELHQVLNRLGMS, and VDADGDGNVNFEEFQKMMTSSSLL. The Ca(2+) site is built by Asp32, Asn34, Asp36, Lys38, Glu43, Asp68, Asp70, Asp72, Tyr74, Glu79, Asp101, Asp103, Asn105, Glu112, Asp137, Asp139, Asp141, Asn143, and Glu148.

In terms of biological role, potential calcium sensor. The polypeptide is Probable calcium-binding protein CML27 (CML27) (Arabidopsis thaliana (Mouse-ear cress)).